The following is a 467-amino-acid chain: Putative alpha-amylase (467 aa).

Catalysis depends on Glu-145, which acts as the Nucleophile.

The protein belongs to the glycosyl hydrolase 57 family.

The enzyme catalyses Endohydrolysis of (1-&gt;4)-alpha-D-glucosidic linkages in polysaccharides containing three or more (1-&gt;4)-alpha-linked D-glucose units.. The polypeptide is Putative alpha-amylase (Methanocaldococcus jannaschii (strain ATCC 43067 / DSM 2661 / JAL-1 / JCM 10045 / NBRC 100440) (Methanococcus jannaschii)).